The sequence spans 374 residues: MRADTNNYRELFLRDVPMLDTRAPTEFSKGAFPGAVNLPLMDDAERQQVGLCYKQRGQDAAIALGHQLVSGPIKARRVAAWADFARAHPDGYLYCFRGGLRSQISQAWLKNEAGIEYPRVIGGYKAMRGFLLQTIDDAVAQCGFVVLGGMTGTGKTDLLRQLDNSLDLEHHAHHRGSSFGKHAVGQPTQIDFDNRLAIDILKKRAAGHDRFVLEDESQAIGACSLPFELYRGMQEYPVVWLEDTTENRVNRILRDYVIDLCAEFVDVHGPEQGFDRFAERLRQSLDNISRRLGGERHRQLAGVMDAALAEQQRSGRVDAHRAWIAALLAQYYDPMYAYQRQRKSQRIVFAGDHQSVLQYLRDPPAVGRALKGFP.

One can recognise a Rhodanese domain in the interval 12–136; that stretch reads FLRDVPMLDT…MRGFLLQTID (125 aa). Residue Cys95 is the S-selanylcysteine intermediate of the active site.

It belongs to the SelU family. In terms of assembly, monomer.

It catalyses the reaction 5-methylaminomethyl-2-thiouridine(34) in tRNA + selenophosphate + (2E)-geranyl diphosphate + H2O + H(+) = 5-methylaminomethyl-2-selenouridine(34) in tRNA + (2E)-thiogeraniol + phosphate + diphosphate. The catalysed reaction is 5-methylaminomethyl-2-thiouridine(34) in tRNA + (2E)-geranyl diphosphate = 5-methylaminomethyl-S-(2E)-geranyl-thiouridine(34) in tRNA + diphosphate. The enzyme catalyses 5-methylaminomethyl-S-(2E)-geranyl-thiouridine(34) in tRNA + selenophosphate + H(+) = 5-methylaminomethyl-2-(Se-phospho)selenouridine(34) in tRNA + (2E)-thiogeraniol. It carries out the reaction 5-methylaminomethyl-2-(Se-phospho)selenouridine(34) in tRNA + H2O = 5-methylaminomethyl-2-selenouridine(34) in tRNA + phosphate. In terms of biological role, involved in the post-transcriptional modification of the uridine at the wobble position (U34) of tRNA(Lys), tRNA(Glu) and tRNA(Gln). Catalyzes the conversion of 2-thiouridine (S2U-RNA) to 2-selenouridine (Se2U-RNA). Acts in a two-step process involving geranylation of 2-thiouridine (S2U) to S-geranyl-2-thiouridine (geS2U) and subsequent selenation of the latter derivative to 2-selenouridine (Se2U) in the tRNA chain. This chain is tRNA 2-selenouridine synthase, found in Bordetella petrii (strain ATCC BAA-461 / DSM 12804 / CCUG 43448).